A 183-amino-acid polypeptide reads, in one-letter code: Translation initiation factor IF-3 (183 aa).

It belongs to the IF-3 family. Monomer.

The protein localises to the cytoplasm. In terms of biological role, IF-3 binds to the 30S ribosomal subunit and shifts the equilibrium between 70S ribosomes and their 50S and 30S subunits in favor of the free subunits, thus enhancing the availability of 30S subunits on which protein synthesis initiation begins. The sequence is that of Translation initiation factor IF-3 from Pseudomonas aeruginosa (strain ATCC 15692 / DSM 22644 / CIP 104116 / JCM 14847 / LMG 12228 / 1C / PRS 101 / PAO1).